Here is a 714-residue protein sequence, read N- to C-terminus: Fatty acid oxidation complex subunit alpha (714 aa).

An enoyl-CoA hydratase region spans residues 1-190 (MEMASAFTLN…KLGLVDDVVP (190 aa)). Positions 306–714 (APLNSVGILG…FWKTTATDLQ (409 aa)) are 3-hydroxyacyl-CoA dehydrogenase.

It in the N-terminal section; belongs to the enoyl-CoA hydratase/isomerase family. In the central section; belongs to the 3-hydroxyacyl-CoA dehydrogenase family. In terms of assembly, heterotetramer of two alpha chains (FadJ) and two beta chains (FadI).

It is found in the cytoplasm. It catalyses the reaction a (3S)-3-hydroxyacyl-CoA = a (2E)-enoyl-CoA + H2O. It carries out the reaction a 4-saturated-(3S)-3-hydroxyacyl-CoA = a (3E)-enoyl-CoA + H2O. The catalysed reaction is a (3S)-3-hydroxyacyl-CoA + NAD(+) = a 3-oxoacyl-CoA + NADH + H(+). The enzyme catalyses (3S)-3-hydroxybutanoyl-CoA = (3R)-3-hydroxybutanoyl-CoA. The protein operates within lipid metabolism; fatty acid beta-oxidation. Catalyzes the formation of a hydroxyacyl-CoA by addition of water on enoyl-CoA. Also exhibits 3-hydroxyacyl-CoA epimerase and 3-hydroxyacyl-CoA dehydrogenase activities. The sequence is that of Fatty acid oxidation complex subunit alpha from Shigella boydii serotype 4 (strain Sb227).